The primary structure comprises 317 residues: Melanocyte-stimulating hormone receptor (317 aa).

Residues 1–26 are disordered; the sequence is MPVQGSPRSLLGAVNSTPTATPHLRP. Residues 1–37 are Extracellular-facing; the sequence is MPVQGSPRSLLGAVNSTPTATPHLRPAANQTGPQCLE. N29 carries an N-linked (GlcNAc...) asparagine glycan. Residues 38–63 form a helical membrane-spanning segment; sequence VSIPDGLFLCLGLVSLVENTLVVAAI. The Cytoplasmic portion of the chain corresponds to 64 to 72; sequence AKNRNLHSP. The helical transmembrane segment at 73 to 93 threads the bilayer; it reads MYCFVCCLALSDLLVSVSSVL. At 94–118 the chain is on the extracellular side; the sequence is ETAVLLLLGAGALAAQATVVQLLGN. Residues 119–140 traverse the membrane as a helical segment; sequence VIDVLLCSSMVSSLFFLGAIAM. The Cytoplasmic portion of the chain corresponds to 141–163; the sequence is DRYISIFYALRYHSIVTLARARR. The helical transmembrane segment at 164–183 threads the bilayer; the sequence is AIAAIWAASMLSSTLFIAYC. Residues 184–191 lie on the Extracellular side of the membrane; it reads DHTAALLC. Residues 192-211 form a helical membrane-spanning segment; that stretch reads LVVFFLAMLVLMAVLYVHML. Topologically, residues 212 to 240 are cytoplasmic; sequence TQACQHAQGIARLHKRQRPVQQGWGLKGA. A helical membrane pass occupies residues 241–266; sequence ATLAILLGVFFLCWGPFFLHLTLIAV. The Extracellular segment spans residues 267 to 279; the sequence is CPQHPTCSCIFKN. The chain crosses the membrane as a helical span at residues 280 to 300; sequence FRLFLALIVCNAIVDPLIYAF. Over 301–317 the chain is Cytoplasmic; sequence RSQELCKTLKELLLFSW.

This sequence belongs to the G-protein coupled receptor 1 family. In terms of assembly, interacts with MGRN1, but does not undergo MGRN1-mediated ubiquitination; this interaction competes with GNAS-binding and thus inhibits agonist-induced cAMP production. Interacts with OPN3; the interaction results in a decrease in MC1R-mediated cAMP signaling and ultimately a decrease in melanin production in melanocytes.

The protein resides in the cell membrane. Its function is as follows. Receptor for MSH (alpha, beta and gamma) and ACTH. The activity of this receptor is mediated by G proteins which activate adenylate cyclase. Mediates melanogenesis, the production of eumelanin (black/brown) and phaeomelanin (red/yellow), via regulation of cAMP signaling in melanocytes. In Hapalemur griseus (Gray gentle lemur), this protein is Melanocyte-stimulating hormone receptor (MC1R).